Reading from the N-terminus, the 211-residue chain is Dual specificity protein phosphatase 26 (211 aa).

Residues 60 to 207 (NHADEVWPGL…LLALDRRLRQ (148 aa)) enclose the Tyrosine-protein phosphatase domain. The active-site Phosphocysteine intermediate is the C152.

Belongs to the protein-tyrosine phosphatase family. Non-receptor class dual specificity subfamily. As to quaternary structure, interacts with HSF4. As to expression, brain. In the brain it is expressed ubiquitously except in the hippocampus. Expressed in embryonal cancers (retinoblastoma, neuroepithilioma and neuroblastoma) and in anaplatic thyroid cancer.

The protein localises to the cytoplasm. Its subcellular location is the nucleus. It is found in the golgi apparatus. It carries out the reaction O-phospho-L-tyrosyl-[protein] + H2O = L-tyrosyl-[protein] + phosphate. The enzyme catalyses O-phospho-L-seryl-[protein] + H2O = L-seryl-[protein] + phosphate. It catalyses the reaction O-phospho-L-threonyl-[protein] + H2O = L-threonyl-[protein] + phosphate. Inactivates MAPK1 and MAPK3 which leads to dephosphorylation of heat shock factor protein 4 and a reduction in its DNA-binding activity. Inhibits MAP kinase p38 by dephosphorylating it and inhibits p38-mediated apoptosis in anaplastic thyroid cancer cells. Can also induce activation of MAP kinase p38 and c-Jun N-terminal kinase (JNK). The sequence is that of Dual specificity protein phosphatase 26 (DUSP26) from Homo sapiens (Human).